The sequence spans 557 residues: CTP synthase (557 aa).

Positions 1 to 267 (MAKYIFVTGG…GAYLTQRLGL (267 aa)) are amidoligase domain. Residue Ser13 coordinates CTP. Ser13 is a binding site for UTP. 14-19 (SVGKGI) contributes to the ATP binding site. Tyr54 is an L-glutamine binding site. Asp71 is an ATP binding site. Positions 71 and 141 each coordinate Mg(2+). CTP is bound by residues 148–150 (DIE), 188–193 (KTKPTQ), and Lys224. Residues 188-193 (KTKPTQ) and Lys224 each bind UTP. Positions 292-535 (AIALVGKYVE…VAAAAKTFRE (244 aa)) constitute a Glutamine amidotransferase type-1 domain. Gly354 provides a ligand contact to L-glutamine. Cys381 acts as the Nucleophile; for glutamine hydrolysis in catalysis. L-glutamine is bound by residues 382 to 385 (LGMQ), Glu406, and Arg463. Catalysis depends on residues His508 and Glu510. The interval 536-557 (GDQRPLPLEQNGAVTEHEPHSR) is disordered.

The protein belongs to the CTP synthase family. Homotetramer.

The catalysed reaction is UTP + L-glutamine + ATP + H2O = CTP + L-glutamate + ADP + phosphate + 2 H(+). The enzyme catalyses L-glutamine + H2O = L-glutamate + NH4(+). It carries out the reaction UTP + NH4(+) + ATP = CTP + ADP + phosphate + 2 H(+). It functions in the pathway pyrimidine metabolism; CTP biosynthesis via de novo pathway; CTP from UDP: step 2/2. With respect to regulation, allosterically activated by GTP, when glutamine is the substrate; GTP has no effect on the reaction when ammonia is the substrate. The allosteric effector GTP functions by stabilizing the protein conformation that binds the tetrahedral intermediate(s) formed during glutamine hydrolysis. Inhibited by the product CTP, via allosteric rather than competitive inhibition. In terms of biological role, catalyzes the ATP-dependent amination of UTP to CTP with either L-glutamine or ammonia as the source of nitrogen. Regulates intracellular CTP levels through interactions with the four ribonucleotide triphosphates. This Roseiflexus sp. (strain RS-1) protein is CTP synthase.